The chain runs to 208 residues: Protein DEHYDRATION-INDUCED 19 homolog 6 (208 aa).

The tract at residues Val151–Glu190 is disordered. Composition is skewed to basic and acidic residues over residues Ser153–Gly163 and Asp170–Glu190.

The protein belongs to the Di19 family.

The sequence is that of Protein DEHYDRATION-INDUCED 19 homolog 6 (DI19-6) from Oryza sativa subsp. japonica (Rice).